Consider the following 584-residue polypeptide: Dihydroxyacetone kinase 1 (584 aa).

Residue Ser2 is modified to N-acetylserine. Residues Ser2 and Ser5 each carry the phosphoserine modification. Residues 7-353 form the DhaK domain; it reads EVTDPVNSSL…LNAFTNAPGW (347 aa). Substrate is bound by residues 51–54, Lys103, and Asp108; that span reads GSGH. His220 acts as the Tele-hemiaminal-histidine intermediate in catalysis. Ser365 carries the post-translational modification Phosphoserine. Positions 386-582 constitute a DhaL domain; sequence DKFAEWMKSG…LCEFLKGVQS (197 aa). ATP contacts are provided by residues 415-418 and 459-460; these read DGDC and TS. At Ser512 the chain carries Phosphoserine. ATP-binding positions include 514 to 515 and 567 to 569; these read TM and DPG.

This sequence belongs to the dihydroxyacetone kinase (DAK) family.

The catalysed reaction is dihydroxyacetone + ATP = dihydroxyacetone phosphate + ADP + H(+). It catalyses the reaction D-glyceraldehyde + ATP = D-glyceraldehyde 3-phosphate + ADP + H(+). It functions in the pathway polyol metabolism; glycerol fermentation; glycerone phosphate from glycerol (oxidative route): step 2/2. Functionally, catalyzes both the phosphorylation of dihydroxyacetone and of glyceraldehyde. This is Dihydroxyacetone kinase 1 (DAK1) from Saccharomyces cerevisiae (strain ATCC 204508 / S288c) (Baker's yeast).